Here is a 114-residue protein sequence, read N- to C-terminus: Reprimo-like protein (114 aa).

The helical transmembrane segment at 61–81 (VVQIAVLCVLSLTVMFGIFFL) threads the bilayer.

This sequence belongs to the reprimo family.

It is found in the membrane. In Danio rerio (Zebrafish), this protein is Reprimo-like protein (rprml).